Consider the following 226-residue polypeptide: Large ribosomal subunit protein uL1 (226 aa).

Belongs to the universal ribosomal protein uL1 family. As to quaternary structure, part of the 50S ribosomal subunit.

In terms of biological role, binds directly to 23S rRNA. Probably involved in E site tRNA release. Protein L1 is also a translational repressor protein, it controls the translation of its operon by binding to its mRNA. The chain is Large ribosomal subunit protein uL1 from Korarchaeum cryptofilum (strain OPF8).